A 475-amino-acid polypeptide reads, in one-letter code: Bifunctional protein HldE (475 aa).

The segment at 1-318 (MMQYSPKFNN…ENAIHHREET (318 aa)) is ribokinase. 195–198 (NMSE) provides a ligand contact to ATP. Asp264 is an active-site residue. The segment at 344–475 (MTNGCFDILH…NVIKKIQASK (132 aa)) is cytidylyltransferase.

The protein in the N-terminal section; belongs to the carbohydrate kinase PfkB family. It in the C-terminal section; belongs to the cytidylyltransferase family. In terms of assembly, homodimer.

It catalyses the reaction D-glycero-beta-D-manno-heptose 7-phosphate + ATP = D-glycero-beta-D-manno-heptose 1,7-bisphosphate + ADP + H(+). The enzyme catalyses D-glycero-beta-D-manno-heptose 1-phosphate + ATP + H(+) = ADP-D-glycero-beta-D-manno-heptose + diphosphate. It participates in nucleotide-sugar biosynthesis; ADP-L-glycero-beta-D-manno-heptose biosynthesis; ADP-L-glycero-beta-D-manno-heptose from D-glycero-beta-D-manno-heptose 7-phosphate: step 1/4. Its pathway is nucleotide-sugar biosynthesis; ADP-L-glycero-beta-D-manno-heptose biosynthesis; ADP-L-glycero-beta-D-manno-heptose from D-glycero-beta-D-manno-heptose 7-phosphate: step 3/4. Catalyzes the phosphorylation of D-glycero-D-manno-heptose 7-phosphate at the C-1 position to selectively form D-glycero-beta-D-manno-heptose-1,7-bisphosphate. Its function is as follows. Catalyzes the ADP transfer from ATP to D-glycero-beta-D-manno-heptose 1-phosphate, yielding ADP-D-glycero-beta-D-manno-heptose. This chain is Bifunctional protein HldE, found in Actinobacillus pleuropneumoniae serotype 5b (strain L20).